Reading from the N-terminus, the 183-residue chain is uncharacterized protein (183 aa).

A disordered region spans residues 136–183 (EPPASVPSKQSGRSDKKKSTRKSPTFRNRPDFRKNKGRQLNKTTKQKK). The segment covering 170–183 (NKGRQLNKTTKQKK) has biased composition (basic residues).

This is an uncharacterized protein from Homo sapiens (Human).